A 430-amino-acid polypeptide reads, in one-letter code: Glutamate-1-semialdehyde 2,1-aminomutase (430 aa).

The residue at position 265 (Lys265) is an N6-(pyridoxal phosphate)lysine.

It belongs to the class-III pyridoxal-phosphate-dependent aminotransferase family. HemL subfamily. In terms of assembly, homodimer. Pyridoxal 5'-phosphate serves as cofactor.

It localises to the cytoplasm. It catalyses the reaction (S)-4-amino-5-oxopentanoate = 5-aminolevulinate. It functions in the pathway porphyrin-containing compound metabolism; protoporphyrin-IX biosynthesis; 5-aminolevulinate from L-glutamyl-tRNA(Glu): step 2/2. The chain is Glutamate-1-semialdehyde 2,1-aminomutase from Shewanella baltica (strain OS195).